Reading from the N-terminus, the 125-residue chain is Fluoride-specific ion channel FluC (125 aa).

Helical transmembrane passes span 1-21 (MIQA…RYYV), 32-52 (AFPW…GVFA), 68-88 (LLIT…LDAI), and 101-121 (IYIA…LAVM). Na(+)-binding residues include Gly75 and Thr78.

It belongs to the fluoride channel Fluc/FEX (TC 1.A.43) family.

It is found in the cell inner membrane. The catalysed reaction is fluoride(in) = fluoride(out). Na(+) is not transported, but it plays an essential structural role and its presence is essential for fluoride channel function. Its function is as follows. Fluoride-specific ion channel. Important for reducing fluoride concentration in the cell, thus reducing its toxicity. In Rhizobium johnstonii (strain DSM 114642 / LMG 32736 / 3841) (Rhizobium leguminosarum bv. viciae), this protein is Fluoride-specific ion channel FluC.